The chain runs to 453 residues: MSLAARDDTIAAIATAVAAGAGSVAIVRISGPQAEAIGRQLFQPAGKQSWESHRVLYGHVNDPANGDVVDEVLLLLMRAPRSFTRETVVEFHGHGGLVAVQRLLELVLAAGARRALPGEFSQRAFLNGRLDLTRAEAISELVSARSRRAAELAMAGLDGGLQQRIEALRDQLLDQLCELEARVDFEEDLPSLDGAAVCTALRDVQQALDQLVLDGQQAQLLRDGLRVAIIGRPNVGKSSLLNALSGHERAIVTDLPGTTRDLLDYDLVLQGVPITLLDTAGIRSTADRVEQLGIERSRAAFASADAVVLLYDLSRGWSPDDSALRNEVPDGTPLLVVGNKSDLAAEPATTQGLAISARSGLGLAELSSALLKLCGLSGEGQGLLLALNQRQCDLAAAASAALGRSQQAARDGLPWDFWTIDLREAIRALGEITGAEITEAVLDRVFSRFCIGK.

(6S)-5-formyl-5,6,7,8-tetrahydrofolate-binding residues include arginine 28, glutamate 90, and arginine 129. The TrmE-type G domain occupies 224 to 375 (GLRVAIIGRP…LSSALLKLCG (152 aa)). Asparagine 234 is a K(+) binding site. Residues 234–239 (NVGKSS), 253–259 (TDLPGTT), 278–281 (DTAG), and 356–358 (SAR) contribute to the GTP site. Mg(2+) is bound at residue serine 238. Residues threonine 253, leucine 255, and threonine 258 each coordinate K(+). Threonine 259 provides a ligand contact to Mg(2+). Lysine 453 is a (6S)-5-formyl-5,6,7,8-tetrahydrofolate binding site.

The protein belongs to the TRAFAC class TrmE-Era-EngA-EngB-Septin-like GTPase superfamily. TrmE GTPase family. As to quaternary structure, homodimer. Heterotetramer of two MnmE and two MnmG subunits. Requires K(+) as cofactor.

The protein resides in the cytoplasm. In terms of biological role, exhibits a very high intrinsic GTPase hydrolysis rate. Involved in the addition of a carboxymethylaminomethyl (cmnm) group at the wobble position (U34) of certain tRNAs, forming tRNA-cmnm(5)s(2)U34. The sequence is that of tRNA modification GTPase MnmE from Synechococcus sp. (strain RCC307).